A 369-amino-acid chain; its full sequence is Maltose/maltodextrin import ATP-binding protein MalK (369 aa).

An ABC transporter domain is found at 4-234 (VTLHNVSKAY…PVNRFVASFI (231 aa)). 36–43 (GPSGCGKS) provides a ligand contact to ATP.

Belongs to the ABC transporter superfamily. Maltooligosaccharide importer (TC 3.A.1.1.1) family. The complex is composed of two ATP-binding proteins (MalK), two transmembrane proteins (MalG and MalK) and a solute-binding protein (MalE).

The protein resides in the cell inner membrane. It catalyses the reaction D-maltose(out) + ATP + H2O = D-maltose(in) + ADP + phosphate + H(+). Functionally, part of the ABC transporter complex MalEFGK involved in maltose/maltodextrin import. Responsible for energy coupling to the transport system. The polypeptide is Maltose/maltodextrin import ATP-binding protein MalK (Photorhabdus laumondii subsp. laumondii (strain DSM 15139 / CIP 105565 / TT01) (Photorhabdus luminescens subsp. laumondii)).